We begin with the raw amino-acid sequence, 429 residues long: Histidinol dehydrogenase (429 aa).

NAD(+) is bound by residues Tyr-127, Gln-188, and Asn-211. Substrate-binding residues include Ser-234, Gln-256, and His-259. The Zn(2+) site is built by Gln-256 and His-259. Catalysis depends on proton acceptor residues Glu-324 and His-325. Positions 325, 358, 412, and 417 each coordinate substrate. Asp-358 serves as a coordination point for Zn(2+). His-417 provides a ligand contact to Zn(2+).

Belongs to the histidinol dehydrogenase family. Zn(2+) serves as cofactor.

It carries out the reaction L-histidinol + 2 NAD(+) + H2O = L-histidine + 2 NADH + 3 H(+). It participates in amino-acid biosynthesis; L-histidine biosynthesis; L-histidine from 5-phospho-alpha-D-ribose 1-diphosphate: step 9/9. Its function is as follows. Catalyzes the sequential NAD-dependent oxidations of L-histidinol to L-histidinaldehyde and then to L-histidine. The chain is Histidinol dehydrogenase from Bacillus thuringiensis subsp. konkukian (strain 97-27).